The primary structure comprises 368 residues: Spermidine/putrescine import ATP-binding protein PotA (368 aa).

In terms of domain architecture, ABC transporter spans 6–236 (VSIKNVSKFF…PVNVFAATFI (231 aa)). Position 38-45 (38-45 (GPSGCGKT)) interacts with ATP.

This sequence belongs to the ABC transporter superfamily. Spermidine/putrescine importer (TC 3.A.1.11.1) family. The complex is composed of two ATP-binding proteins (PotA), two transmembrane proteins (PotB and PotC) and a solute-binding protein (PotD).

The protein resides in the cell inner membrane. It carries out the reaction ATP + H2O + polyamine-[polyamine-binding protein]Side 1 = ADP + phosphate + polyamineSide 2 + [polyamine-binding protein]Side 1.. In terms of biological role, part of the ABC transporter complex PotABCD involved in spermidine/putrescine import. Responsible for energy coupling to the transport system. The protein is Spermidine/putrescine import ATP-binding protein PotA of Thermotoga maritima (strain ATCC 43589 / DSM 3109 / JCM 10099 / NBRC 100826 / MSB8).